A 212-amino-acid polypeptide reads, in one-letter code: Calaxin (212 aa).

3 consecutive EF-hand domains span residues 65-100 (TDDM…FLRG), 101-136 (TLDE…SLLK), and 146-181 (GIKD…ENLL). Ca(2+) is bound by residues Asp-78, Asp-80, Asp-82, Cys-84, Glu-89, Asp-114, Asn-116, Asp-118, Glu-125, Asp-159, Asp-161, Asp-163, Lys-165, and Asp-170.

As to quaternary structure, component of the outer dynein arm-docking complex along with ODAD1, ODAD2, ODAD3 and ODAD4.

The protein resides in the cytoplasm. Its subcellular location is the cytoskeleton. The protein localises to the cilium axoneme. It is found in the cell projection. It localises to the cilium. The protein resides in the flagellum. In terms of biological role, component of the outer dynein arm-docking complex (ODA-DC) that mediates outer dynein arms (ODA) binding onto the doublet microtubule. Seems to regulate the assembly of both ODAs and their axonemal docking complex onto ciliary microtubules. Regulates ciliary and flagellar motility and is required for cilia-driven determination of body laterality. The sequence is that of Calaxin (Clxn) from Mus musculus (Mouse).